The sequence spans 319 residues: RNA polymerase II holoenzyme cyclin-like subunit (319 aa).

In terms of domain architecture, Cyclin N-terminal spans 53–142 (QQLIRLAKRL…LGECEFFMIS (90 aa)). Positions 237 to 251 (QGQQAQGGMPEPAAA) are enriched in low complexity. The tract at residues 237-261 (QGQQAQGGMPEPAAAEPKEKRQQDR) is disordered. Over residues 252–261 (EPKEKRQQDR) the composition is skewed to basic and acidic residues.

The protein belongs to the cyclin family. Cyclin C subfamily. Component of the SRB8-11 complex, a regulatory module of the Mediator complex. Interacts with SSN3/FCK1.

The protein resides in the nucleus. Its function is as follows. Component of the SRB8-11 complex. The SRB8-11 complex is a regulatory module of the Mediator complex which is itself involved in regulation of basal and activated RNA polymerase II-dependent transcription. The SRB8-11 complex may be involved in the transcriptional repression of a subset of genes regulated by Mediator. It may inhibit the association of the Mediator complex with RNA polymerase II to form the holoenzyme complex. The SRB8-11 complex phosphorylates the C-terminal domain (CTD) of the largest subunit of RNA polymerase II. May play a role in signal transduction pathways regulating secondary metabolism and fungal development (conidiation). The protein is RNA polymerase II holoenzyme cyclin-like subunit (SSN8) of Gibberella moniliformis (Maize ear and stalk rot fungus).